Consider the following 303-residue polypeptide: 1-phosphofructokinase (303 aa).

Position 248–249 (248–249) interacts with ATP; it reads GD. The Proton acceptor role is filled by Asp-249.

The protein belongs to the carbohydrate kinase PfkB family.

It catalyses the reaction beta-D-fructose 1-phosphate + ATP = beta-D-fructose 1,6-bisphosphate + ADP + H(+). Functionally, catalyzes the ATP-dependent phosphorylation of fructose-l-phosphate to fructose-l,6-bisphosphate. This is 1-phosphofructokinase (fruK) from Bacillus subtilis (strain 168).